The chain runs to 193 residues: Ion-translocating oxidoreductase complex subunit A (193 aa).

A run of 6 helical transmembrane segments spans residues Phe-4 to Gly-24, Ile-39 to Val-59, Ile-63 to Val-83, Leu-102 to Leu-122, Val-134 to Met-154, and Ser-171 to Val-191.

The protein belongs to the NqrDE/RnfAE family. The complex is composed of six subunits: RnfA, RnfB, RnfC, RnfD, RnfE and RnfG.

It is found in the cell inner membrane. Its function is as follows. Part of a membrane-bound complex that couples electron transfer with translocation of ions across the membrane. The protein is Ion-translocating oxidoreductase complex subunit A of Pseudoalteromonas atlantica (strain T6c / ATCC BAA-1087).